The sequence spans 331 residues: UPF0324 membrane protein YdhF (331 aa).

A run of 8 helical transmembrane segments spans residues 2 to 20, 24 to 46, 82 to 104, 114 to 136, 148 to 170, 204 to 226, 247 to 269, and 308 to 330; these read SILP…SYLL, IFHS…NLYF, LGFS…VLFM, VSAL…VEPV, IAMV…TWMF, TLAT…YFGF, SFLP…IHFV, and LIYG…SLLI.

The protein belongs to the UPF0324 family.

It is found in the cell membrane. This Lactococcus lactis subsp. lactis (strain IL1403) (Streptococcus lactis) protein is UPF0324 membrane protein YdhF (ydhF).